A 393-amino-acid chain; its full sequence is Phosphoglycerate kinase (393 aa).

Residues 21-23, Arg-36, 59-62, Arg-114, and Arg-147 contribute to the substrate site; these read DLN and HLGR. ATP contacts are provided by residues Lys-198, Glu-314, and 340-343; that span reads GGDT.

The protein belongs to the phosphoglycerate kinase family. In terms of assembly, monomer.

The protein resides in the cytoplasm. The catalysed reaction is (2R)-3-phosphoglycerate + ATP = (2R)-3-phospho-glyceroyl phosphate + ADP. It functions in the pathway carbohydrate degradation; glycolysis; pyruvate from D-glyceraldehyde 3-phosphate: step 2/5. This Buchnera aphidicola subsp. Baizongia pistaciae (strain Bp) protein is Phosphoglycerate kinase.